A 442-amino-acid polypeptide reads, in one-letter code: Type 3 secretion system ATPase (442 aa).

173–178 (GVGKST) contributes to the ATP binding site.

It belongs to the ATPase alpha/beta chains family. T3SS ATPase subfamily. In terms of assembly, the core secretion machinery of the T3SS is composed of approximately 20 different proteins, including cytoplasmic components, a base, an export apparatus and a needle. This subunit is part of the cytosolic complex. Forms homohexamers.

It is found in the cytoplasm. The catalysed reaction is ATP + H2O + cellular proteinSide 1 = ADP + phosphate + cellular proteinSide 2.. ATPase component of the type III secretion system (T3SS), also called injectisome, which is used to inject bacterial effector proteins into eukaryotic host cells. Acts as a molecular motor to provide the energy that is required for the export of proteins. Required for type III secretion apparatus (T3SA) formation, proper protein secretion, host cell invasion and virulence. May play a critical role in T3SS substrate recognition, disassembly of the effector/chaperone complex and unfolding of the effector in an ATP-dependent manner prior to secretion. The protein is Type 3 secretion system ATPase of Xanthomonas euvesicatoria.